We begin with the raw amino-acid sequence, 318 residues long: MVELMFPLLLLLLPFLLYMAAPQIRKMLSSGVCTSTVQLPGKVVVVTGANTGIGKETAKELAQRGARVYLACRDVEKGELVAKEIQTTTGNQQVLVRKLDLSDTKSIRAFAKGFLAEEKHLHVLINNAGVMMCPYSKTADGFEMHIGVNHLGHFLLTHLLLEKLKESAPSRIVNVSSLAHHLGRIHFHNLQGEKFYNAGLAYCHSKLANILFTQELARRLKGSGVTTYSVHPGTVQSELVRHSSFMRWMWWLFSFFIKTPQQGAQTSLHCALTEGLEILSGNHFSDCHVAWVSAQARNETIARRLWDVSCDLLGLPID.

Residues 1-21 (MVELMFPLLLLLLPFLLYMAA) traverse the membrane as a helical; Signal-anchor for type II membrane protein segment. Topologically, residues 22 to 318 (PQIRKMLSSG…SCDLLGLPID (297 aa)) are cytoplasmic. 48 to 54 (GANTGIG) contacts NADP(+). Lysine 112 carries the post-translational modification N6-acetyllysine. Residue serine 177 coordinates substrate. Tyrosine 202 serves as the catalytic Proton acceptor.

It belongs to the short-chain dehydrogenases/reductases (SDR) family. In terms of assembly, interacts with SELENOF. Not glycosylated. Predominantly expressed in the epithelial cells of prostate, in both basal and luminal secretory cell populations. Expressed at low levels in spleen, thymus, testis, ovary, small intestine, colon, peripherical blood leukocytes, kidney, adrenal gland and fetal liver. Not detected in prostatic fibromuscular stromal cells, endothelial cells, or infiltrating lymphocytes.

It localises to the endoplasmic reticulum membrane. The catalysed reaction is all-trans-retinol + NADP(+) = all-trans-retinal + NADPH + H(+). It carries out the reaction 11-cis-retinol + NADP(+) = 11-cis-retinal + NADPH + H(+). It catalyses the reaction 9-cis-retinol + NADP(+) = 9-cis-retinal + NADPH + H(+). The enzyme catalyses 13-cis-retinol + NADP(+) = 13-cis-retinal + NADPH + H(+). It participates in cofactor metabolism; retinol metabolism. With respect to regulation, SELENOF decreases the retinol dehydrogenase activity. In terms of biological role, retinol dehydrogenase with a clear preference for NADP. Displays high activity towards 9-cis, 11-cis and all-trans-retinol, and to a lesser extent on 13-cis-retinol. Exhibits a low reductive activity towards unsaturated medium-chain aldehydes such as cis -6-nonenal and no activity toward nonanal or 4-hydroxy-nonenal. Has no dehydrogenase activity towards steroid. This chain is Retinol dehydrogenase 11 (RDH11), found in Homo sapiens (Human).